Here is a 203-residue protein sequence, read N- to C-terminus: A-type ATP synthase subunit E (203 aa).

This sequence belongs to the V-ATPase E subunit family. Has multiple subunits with at least A(3), B(3), C, D, E, F, H, I and proteolipid K(x).

It is found in the cell membrane. Its function is as follows. Component of the A-type ATP synthase that produces ATP from ADP in the presence of a proton gradient across the membrane. In Methanococcus maripaludis (strain C6 / ATCC BAA-1332), this protein is A-type ATP synthase subunit E.